The primary structure comprises 145 residues: Peptide methionine sulfoxide reductase MsrB (145 aa).

The MsrB domain maps to 6–129; sequence KNERLQQLTD…NSAALRFIPV (124 aa). The Nucleophile role is filled by cysteine 118.

Belongs to the MsrB Met sulfoxide reductase family.

The catalysed reaction is L-methionyl-[protein] + [thioredoxin]-disulfide + H2O = L-methionyl-(R)-S-oxide-[protein] + [thioredoxin]-dithiol. This is Peptide methionine sulfoxide reductase MsrB from Listeria monocytogenes serotype 4a (strain HCC23).